We begin with the raw amino-acid sequence, 115 residues long: NADH-ubiquinone oxidoreductase chain 3 (115 aa).

Transmembrane regions (helical) follow at residues 3 to 23 (IMITLFINMSLASLLVLIAFW), 55 to 75 (FFLVAITFLLFDLEIALLLPL), and 87 to 107 (MLTTALVLILLLALGLAYEWL).

The protein belongs to the complex I subunit 3 family. Core subunit of respiratory chain NADH dehydrogenase (Complex I) which is composed of 45 different subunits. Interacts with TMEM186. Interacts with TMEM242.

Its subcellular location is the mitochondrion inner membrane. It carries out the reaction a ubiquinone + NADH + 5 H(+)(in) = a ubiquinol + NAD(+) + 4 H(+)(out). Functionally, core subunit of the mitochondrial membrane respiratory chain NADH dehydrogenase (Complex I) which catalyzes electron transfer from NADH through the respiratory chain, using ubiquinone as an electron acceptor. Essential for the catalytic activity of complex I. This chain is NADH-ubiquinone oxidoreductase chain 3, found in Dasypus novemcinctus (Nine-banded armadillo).